Here is an 89-residue protein sequence, read N- to C-terminus: Small ribosomal subunit protein uS17 (89 aa).

It belongs to the universal ribosomal protein uS17 family. As to quaternary structure, part of the 30S ribosomal subunit.

Its function is as follows. One of the primary rRNA binding proteins, it binds specifically to the 5'-end of 16S ribosomal RNA. This chain is Small ribosomal subunit protein uS17, found in Coxiella burnetii (strain Dugway 5J108-111).